The following is a 215-amino-acid chain: Large ribosomal subunit protein bL25 (215 aa).

The tract at residues 160–215 is disordered; sequence GDLPLPEGSELVTEPEETVMSVVAPETEEEPDTEEDEEGEEDVEEESEEEEEESEE. Positions 185–215 are enriched in acidic residues; it reads ETEEEPDTEEDEEGEEDVEEESEEEEEESEE.

Belongs to the bacterial ribosomal protein bL25 family. CTC subfamily. As to quaternary structure, part of the 50S ribosomal subunit; part of the 5S rRNA/L5/L18/L25 subcomplex. Contacts the 5S rRNA. Binds to the 5S rRNA independently of L5 and L18.

Its function is as follows. This is one of the proteins that binds to the 5S RNA in the ribosome where it forms part of the central protuberance. The sequence is that of Large ribosomal subunit protein bL25 from Natranaerobius thermophilus (strain ATCC BAA-1301 / DSM 18059 / JW/NM-WN-LF).